The chain runs to 1040 residues: Multidrug resistance protein MdtB (1040 aa).

The next 12 membrane-spanning stretches (helical) occupy residues 16 to 36 (FIMRPVATTLLMVAILLAGII), 347 to 367 (LMMAIALVVMIIYLFLRNIPA), 369 to 389 (IIPGVAVPLSLIGTFAVMVFL), 396 to 416 (LTLMALTIATGFVVDDAIVVI), 440 to 460 (IGFTIISLTFSLIAVLIPLLF), 472 to 492 (FAITLAVAILISAVVSLTLTP), 537 to 557 (WLTLSVALSTLLLSVLLWVFI), 863 to 883 (LGSTVWLIVAAVVAMYIVLGI), 888 to 908 (FIHPITILSTLPTAGVGALLA), 911 to 931 (IAGSELDVIAIIGIILLIGIV), 968 to 988 (ILMTTLAALLGALPLMLSTGV), and 998 to 1018 (IGMVGGLIVSQVLTLFTTPVI).

This sequence belongs to the resistance-nodulation-cell division (RND) (TC 2.A.6) family. MdtB subfamily. In terms of assembly, part of a tripartite efflux system composed of MdtA, MdtB and MdtC. MdtB forms a heteromultimer with MdtC.

It is found in the cell inner membrane. Its function is as follows. The MdtABC tripartite complex confers resistance against novobiocin and deoxycholate. The sequence is that of Multidrug resistance protein MdtB from Escherichia coli (strain K12 / MC4100 / BW2952).